The primary structure comprises 641 residues: Chaperone protein DnaK (641 aa).

Residue T199 is modified to Phosphothreonine; by autocatalysis. A compositionally biased stretch (polar residues) spans 603–613 (YTQQGGTAGSE). The segment at 603-641 (YTQQGGTAGSETHSHEKAGGSGGDDVVDAEFEEVRDDKR) is disordered. Positions 627–641 (DVVDAEFEEVRDDKR) are enriched in acidic residues.

Belongs to the heat shock protein 70 family.

In terms of biological role, acts as a chaperone. In Methylococcus capsulatus (strain ATCC 33009 / NCIMB 11132 / Bath), this protein is Chaperone protein DnaK.